Reading from the N-terminus, the 335-residue chain is Cell division protein ZipA (335 aa).

At 1–4 the chain is on the periplasmic side; it reads MDLN. Residues 5–25 form a helical membrane-spanning segment; the sequence is AILIILGVIALIILVAHGIWS. At 26–335 the chain is on the cytoplasmic side; sequence NRREKSQYFE…AERDYLARVS (310 aa).

It belongs to the ZipA family. Interacts with FtsZ via their C-terminal domains.

It is found in the cell inner membrane. Functionally, essential cell division protein that stabilizes the FtsZ protofilaments by cross-linking them and that serves as a cytoplasmic membrane anchor for the Z ring. Also required for the recruitment to the septal ring of downstream cell division proteins. In Histophilus somni (strain 2336) (Haemophilus somnus), this protein is Cell division protein ZipA.